The sequence spans 218 residues: tRNA (guanine-N(7)-)-methyltransferase (218 aa).

S-adenosyl-L-methionine contacts are provided by Glu45, Glu70, Asp97, and Asp119. Asp119 is an active-site residue. Lys123 contributes to the substrate binding site. Residues 125-130 are interaction with RNA; that stretch reads RHEKRR. Residues Asp155 and 195–198 contribute to the substrate site; that span reads TEYE.

The protein belongs to the class I-like SAM-binding methyltransferase superfamily. TrmB family.

The catalysed reaction is guanosine(46) in tRNA + S-adenosyl-L-methionine = N(7)-methylguanosine(46) in tRNA + S-adenosyl-L-homocysteine. Its pathway is tRNA modification; N(7)-methylguanine-tRNA biosynthesis. Functionally, catalyzes the formation of N(7)-methylguanine at position 46 (m7G46) in tRNA. The sequence is that of tRNA (guanine-N(7)-)-methyltransferase from Lactobacillus acidophilus (strain ATCC 700396 / NCK56 / N2 / NCFM).